The chain runs to 124 residues: Small ribosomal subunit protein uS12 (124 aa).

Disordered regions lie at residues 9–32 and 105–124; these read RKGR…QRRG and QGVK…KEKS. The span at 108 to 118 shows a compositional bias: basic residues; sequence KNRKQARSRYG.

Belongs to the universal ribosomal protein uS12 family. Part of the 30S ribosomal subunit. Contacts proteins S8 and S17. May interact with IF1 in the 30S initiation complex.

With S4 and S5 plays an important role in translational accuracy. In terms of biological role, interacts with and stabilizes bases of the 16S rRNA that are involved in tRNA selection in the A site and with the mRNA backbone. Located at the interface of the 30S and 50S subunits, it traverses the body of the 30S subunit contacting proteins on the other side and probably holding the rRNA structure together. The combined cluster of proteins S8, S12 and S17 appears to hold together the shoulder and platform of the 30S subunit. The sequence is that of Small ribosomal subunit protein uS12 from Nocardia farcinica (strain IFM 10152).